A 146-amino-acid chain; its full sequence is Large ribosomal subunit protein uL15y (146 aa).

2 stretches are compositionally biased toward basic residues: residues 1-14 (MATALKKNRKKRGH) and 21-30 (RIGKHRKHPG). A disordered region spans residues 1-38 (MATALKKNRKKRGHVSAGHGRIGKHRKHPGGRGNAGGM).

It belongs to the universal ribosomal protein uL15 family.

The chain is Large ribosomal subunit protein uL15y (RPL27AB) from Arabidopsis thaliana (Mouse-ear cress).